The following is a 291-amino-acid chain: Ajmaline N-methyltransferase (291 aa).

The interval 71–80 (MLDVGCGIGG) is SAM motif I. The Vacuolar targeting signal signature appears at 133–139 (DGAFDLV). The interval 134–142 (GAFDLVLSI) is SAM motif II. The interval 161-170 (VAASGATIII) is SAM motif III.

It belongs to the class I-like SAM-binding methyltransferase superfamily. gTMT family. As to quaternary structure, homodimer. In terms of tissue distribution, mainly expressed in roots, but barely detectable in stems and flowers.

Its subcellular location is the vacuole membrane. The catalysed reaction is ajmaline + S-adenosyl-L-methionine = 4-methylajmaline + S-adenosyl-L-homocysteine + H(+). It catalyses the reaction norajmaline + S-adenosyl-L-methionine = 4-methylnorajmaline + S-adenosyl-L-homocysteine + H(+). It functions in the pathway alkaloid biosynthesis; ajmaline biosynthesis. N-methyltransferase involved in the biosynthesis of ajmaline-type monoterpenoid indole alkaloids (MIAs) natural products, important plant-derived pharmaceuticals used in the therapy of heart disorders. Catalyzes the indole N-methylation of ajmaline to produce 4-methylajmaline. Also able, with a lower efficiency, to mediates the conversion of norajmaline to 4-methylnorajmaline. The protein is Ajmaline N-methyltransferase of Rauvolfia serpentina (Serpentine wood).